The following is a 941-amino-acid chain: Probable lipoxygenase 8, chloroplastic (941 aa).

Disordered stretches follow at residues 1–22 (MLRPQLNPSSSHHHTTTTSSSS) and 45–68 (LIAGAGCRTTRRRQQGRQRVVVRC). The N-terminal 67 residues, 1–67 (MLRPQLNPSS…QQGRQRVVVR (67 aa)), are a transit peptide targeting the chloroplast. Residues 100-236 (AVATIKVTVE…SIDEGTPGKR (137 aa)) enclose the PLAT domain. A Lipoxygenase domain is found at 242-941 (AYLPGQTPAG…GMGIPNSTSI (700 aa)). Disordered stretches follow at residues 255–274 (YREEDLKQKRGNGAGQREAD) and 288–331 (NPDS…RKGN). Basic and acidic residues predominate over residues 319–331 (SKKDPKSETRKGN). Histidine 598, histidine 603, histidine 790, asparagine 794, and isoleucine 941 together coordinate Fe cation.

This sequence belongs to the lipoxygenase family. The cofactor is Fe cation.

It is found in the plastid. Its subcellular location is the chloroplast. It catalyses the reaction (9Z,12Z)-octadecadienoate + O2 = (13S)-hydroperoxy-(9Z,11E)-octadecadienoate. It carries out the reaction (9Z,12Z,15Z)-octadecatrienoate + O2 = (13S)-hydroperoxy-(9Z,11E,15Z)-octadecatrienoate. Its pathway is lipid metabolism; oxylipin biosynthesis. Its function is as follows. Plant lipoxygenase may be involved in a number of diverse aspects of plant physiology including growth and development, pest resistance, and senescence or responses to wounding. It catalyzes the hydroperoxidation of lipids containing a cis,cis-1,4-pentadiene structure. This is Probable lipoxygenase 8, chloroplastic (CM-LOX2) from Oryza sativa subsp. japonica (Rice).